Reading from the N-terminus, the 189-residue chain is Putative biopolymer transport protein ExbB-like 1 (189 aa).

3 helical membrane passes run 14-34, 99-119, and 147-167; these read FVTTLVLVWISLYLVMTLWVF, LVVLSIISSTAPFIGLFGTVV, and LIATAAGILAAIPAYSFYLIL.

Belongs to the ExbB/TolQ family.

Its subcellular location is the cell inner membrane. This Helicobacter pylori (strain ATCC 700392 / 26695) (Campylobacter pylori) protein is Putative biopolymer transport protein ExbB-like 1.